The chain runs to 384 residues: ATP phosphoribosyltransferase regulatory subunit (384 aa).

The protein belongs to the class-II aminoacyl-tRNA synthetase family. HisZ subfamily. Heteromultimer composed of HisG and HisZ subunits.

It localises to the cytoplasm. It participates in amino-acid biosynthesis; L-histidine biosynthesis; L-histidine from 5-phospho-alpha-D-ribose 1-diphosphate: step 1/9. Required for the first step of histidine biosynthesis. May allow the feedback regulation of ATP phosphoribosyltransferase activity by histidine. The polypeptide is ATP phosphoribosyltransferase regulatory subunit (Azoarcus sp. (strain BH72)).